Consider the following 348-residue polypeptide: Alternative squalene epoxidase (348 aa).

The segment covering 1–10 (MLVDRVENNE) has biased composition (basic and acidic residues). The disordered stretch occupies residues 1–26 (MLVDRVENNEKQQQQMASSSDAMSDS). The segment covering 12–26 (QQQQMASSSDAMSDS) has biased composition (low complexity). The next 3 helical transmembrane spans lie at 55 to 75 (AIAW…LLLS), 105 to 125 (LGLV…WIFF), and 153 to 173 (GLLT…YLAI). The Fatty acid hydroxylase domain maps to 197 to 332 (FMCLVLQDGI…FMWFDQLGGT (136 aa)). A Histidine box-1 motif is present at residues 211–215 (HVLEH). Residues 226-230 (HKPHH) carry the Histidine box-2 motif. 2 consecutive transmembrane segments (helical) span residues 243–263 (GSLM…ANLV) and 277–297 (SYAC…DGIF). The short motif at 308-312 (HHVHH) is the Histidine box-3 element.

The protein belongs to the sterol desaturase family. As to quaternary structure, interacts with cytochrome b5/PHATRDRAFT_30770. Requires Fe cation as cofactor.

It localises to the endoplasmic reticulum membrane. The catalysed reaction is squalene + 2 Fe(II)-[cytochrome b5] + O2 + 2 H(+) = (S)-2,3-epoxysqualene + 2 Fe(III)-[cytochrome b5] + H2O. It functions in the pathway terpene metabolism; lanosterol biosynthesis; lanosterol from farnesyl diphosphate. Its activity is regulated as follows. The activity of this enzyme is not inhibited by terbinafine, an established inhibitor of the conventional flavoprotein squalene epoxidase. In terms of biological role, catalyzes the stereospecific epoxidation of squalene at the terminal double bond to form (S)-2,3-epoxysqualene, the first oxygenation step in sterol biosynthesis. The sequence is that of Alternative squalene epoxidase from Phaeodactylum tricornutum (strain CCAP 1055/1).